The chain runs to 235 residues: Putative N-acetylmannosamine-6-phosphate 2-epimerase (235 aa).

Belongs to the NanE family.

The enzyme catalyses an N-acyl-D-glucosamine 6-phosphate = an N-acyl-D-mannosamine 6-phosphate. The protein operates within amino-sugar metabolism; N-acetylneuraminate degradation; D-fructose 6-phosphate from N-acetylneuraminate: step 3/5. In terms of biological role, converts N-acetylmannosamine-6-phosphate (ManNAc-6-P) to N-acetylglucosamine-6-phosphate (GlcNAc-6-P). This chain is Putative N-acetylmannosamine-6-phosphate 2-epimerase, found in Photobacterium profundum (strain SS9).